We begin with the raw amino-acid sequence, 473 residues long: UDP-glycosyltransferase 91D2 (473 aa).

Catalysis depends on His-26, which acts as the Proton acceptor. His-26 contributes to the an anthocyanidin binding site. The active-site Charge relay is Asp-121. Residues Ala-344, Gln-346, His-361, Ser-366, and Glu-369 each coordinate UDP-alpha-D-glucose. Gly-384 lines the an anthocyanidin pocket. UDP-alpha-D-glucose is bound by residues Asp-385 and Gln-386.

It belongs to the UDP-glycosyltransferase family.

It carries out the reaction steviolmonoside + UDP-alpha-D-glucose = steviolbioside + UDP + H(+). The catalysed reaction is rubusoside + UDP-alpha-D-glucose = stevioside + UDP + H(+). It catalyses the reaction stevioside + UDP-alpha-D-glucose = rebaudioside E + UDP + H(+). The enzyme catalyses rebaudioside A + UDP-alpha-D-glucose = rebaudioside D + UDP + H(+). Functionally, involved in the biosynthesis of steviol glycosides in leaves. Converts the mono-glycoside steviolmonoside to the bi-glycoside steviolbioside. Converts the bi-glycoside rubusoside to the tri-glycoside stevioside. Converts the tri-glycoside stevioside to the tetra-glycoside rebaudioside E. Converts the tetra-glycoside rebaudioside A to the penta-glycoside rebaudioside E. In Stevia rebaudiana (Stevia), this protein is UDP-glycosyltransferase 91D2.